The sequence spans 187 residues: UPF0301 protein YqgE (187 aa).

This sequence belongs to the UPF0301 (AlgH) family.

This chain is UPF0301 protein YqgE, found in Escherichia coli O7:K1 (strain IAI39 / ExPEC).